The following is an 840-amino-acid chain: Phosphatidylinositol-3-phosphatase myotubularin-1 (840 aa).

The tract at residues M1–G28 is disordered. Residues S13–D25 show a composition bias toward basic and acidic residues. The GRAM domain occupies G45–V112. The Myotubularin phosphatase domain occupies G199–H650. Residues N332–M335, N357–I358, C443–R449, and R489 each bind substrate. Catalysis depends on C443, which acts as the Phosphocysteine intermediate. The segment at Q506–G535 is disordered. A compositionally biased stretch (low complexity) spans S507 to G535. A coiled-coil region spans residues V666–L734. A disordered region spans residues V745–V771.

The protein belongs to the protein-tyrosine phosphatase family. Non-receptor class myotubularin subfamily. Mostly expressed in siliques and leaves (including hydathodes), and, to a lower extent, in flowers and roots.

It is found in the cytoplasm. The protein resides in the endosome membrane. It catalyses the reaction a 1,2-diacyl-sn-glycero-3-phospho-(1D-myo-inositol-3-phosphate) + H2O = a 1,2-diacyl-sn-glycero-3-phospho-(1D-myo-inositol) + phosphate. The enzyme catalyses a 1,2-diacyl-sn-glycero-3-phospho-(1D-myo-inositol-3,5-bisphosphate) + H2O = a 1,2-diacyl-sn-glycero-3-phospho-(1D-myo-inositol-5-phosphate) + phosphate. Its function is as follows. Phosphatase with phosphoinositide 3'-phosphatase activity that can use phosphatidylinositol-3-phosphate (PtdIns3P) and phosphatidylinositol-3,5-diphosphate (PtdIns3,5P(2)) as substrates and produces phosphatidylinositol-5-phosphate (PtdIns5P); participates in pathway(s) that transfer gene regulatory signals to the nucleus. Required for recovery after water deprivation, via the accumulation of PtdIns5P upon dehydration; high PtdIns5P levels mediate ATX1 cytoplasmic localization, thus down-regulating the expression of ATX1-dependent genes. Confers sensitivity to soil-water-deficit stress. This chain is Phosphatidylinositol-3-phosphatase myotubularin-1 (MTM1), found in Arabidopsis thaliana (Mouse-ear cress).